The primary structure comprises 508 residues: Alpha-amylase (508 aa).

Residues 1 to 19 (MLSLIIAACCVTVALAGTF) form the signal peptide. Cysteines 46 and 102 form a disulfide. Ca(2+) is bound by residues N116, R173, and D182. Cysteines 156 and 175 form a disulfide. R210 is a binding site for chloride. The active-site Nucleophile is the D212. H216 contacts Ca(2+). E248 (proton donor) is an active-site residue. The chloride site is built by N311 and R349. 2 disulfide bridges follow: C383-C389 and C455-C467.

Belongs to the glycosyl hydrolase 13 family. Monomer. Requires Ca(2+) as cofactor. The cofactor is chloride.

The catalysed reaction is Endohydrolysis of (1-&gt;4)-alpha-D-glucosidic linkages in polysaccharides containing three or more (1-&gt;4)-alpha-linked D-glucose units.. The protein is Alpha-amylase of Pecten maximus (King scallop).